Consider the following 117-residue polypeptide: uncharacterized protein (117 aa).

Belongs to the transposase 34 family.

This is an uncharacterized protein from Sinorhizobium fredii (strain NBRC 101917 / NGR234).